Reading from the N-terminus, the 207-residue chain is MPMRKRHFYRLLPLASLLLAACTIPVSKGPATSPTSPQWRQHEQQLQQLGQFETRGAFAYLSDKQKVYARFFWQQTSPERYRLLLTNPLGSTELELVVQPGVTQLTDNQGKRYVSDDPQEMIQKLTGMSIPLESLRQWILGLPGDTPNFTLDDKYRLKKLTYQQNGVTWVVNYQEYNTQVTPPLPSRLELNQDGQRIKLKMDSWTIK.

The N-terminal stretch at 1–21 is a signal peptide; the sequence is MPMRKRHFYRLLPLASLLLAA. C22 carries N-palmitoyl cysteine lipidation. The S-diacylglycerol cysteine moiety is linked to residue C22.

This sequence belongs to the LolB family. As to quaternary structure, monomer.

Its subcellular location is the cell outer membrane. In terms of biological role, plays a critical role in the incorporation of lipoproteins in the outer membrane after they are released by the LolA protein. This is Outer-membrane lipoprotein LolB from Yersinia pseudotuberculosis serotype O:1b (strain IP 31758).